The following is a 218-amino-acid chain: Non-structural protein NP-1 (218 aa).

2 disordered regions span residues 1–89 (MSSG…RTNP) and 195–218 (TESE…DASN). Composition is skewed to basic residues over residues 8 to 18 (DKHRAYKRKGS) and 27 to 40 (PWQP…RSPI). A compositionally biased stretch (polar residues) spans 58-67 (SHLSSCTASK). Residues 73 to 86 (TKTKENTSGKRDSR) are compositionally biased toward basic and acidic residues. Acidic residues predominate over residues 196 to 205 (ESEEITDEEM).

The protein belongs to the Bocaparvovirus Non-structural protein NP-1 family.

It is found in the host nucleus. Functionally, required for the expression of the capsid proteins. Performs the splicing and internal polyadenylation of the viral capsid-encoding mRNA precursor, which allows its maturation and expression. Transactivates the viral promoter. In Human bocavirus 3 (HBoV3), this protein is Non-structural protein NP-1 (NP1).